We begin with the raw amino-acid sequence, 364 residues long: DNA polymerase IV (364 aa).

The UmuC domain maps to I14–G198. D18 and D116 together coordinate Mg(2+). E117 is an active-site residue.

It belongs to the DNA polymerase type-Y family. As to quaternary structure, monomer. Requires Mg(2+) as cofactor.

It localises to the cytoplasm. It carries out the reaction DNA(n) + a 2'-deoxyribonucleoside 5'-triphosphate = DNA(n+1) + diphosphate. In terms of biological role, poorly processive, error-prone DNA polymerase involved in untargeted mutagenesis. Copies undamaged DNA at stalled replication forks, which arise in vivo from mismatched or misaligned primer ends. These misaligned primers can be extended by PolIV. Exhibits no 3'-5' exonuclease (proofreading) activity. May be involved in translesional synthesis, in conjunction with the beta clamp from PolIII. In Streptococcus pyogenes serotype M12 (strain MGAS2096), this protein is DNA polymerase IV.